Here is a 457-residue protein sequence, read N- to C-terminus: Multidrug resistance protein MdtK (457 aa).

Transmembrane regions (helical) follow at residues 11–31, 53–73, 93–113, 127–147, 160–180, 188–208, 243–263, 276–296, 314–334, 357–377, 387–407, and 418–438; these read LLALAIPVILAQIAQTAMGFV, IWLPAILFGHGLLLALTPVIA, WLAGCVSVLIMFVLWNAGYII, AVGYLRALLWGAPGYLFFQVA, GMVIGFLGLLVNIPVNYIFIY, LGGVGCGVATAAVYWVMFIAM, LPIALALFFEVTLFAVVALLV, IALNFSSLMFVLPMSLAAAVT, AARTGLGVGVCMAVITAIFTV, LMLLAAVYQISDSIQVIGSGI, IFFITFTAYWVLGLPSGYILA, and PAGFWMGFIIGLTSAAIMMML.

The protein belongs to the multi antimicrobial extrusion (MATE) (TC 2.A.66.1) family. MdtK subfamily.

The protein localises to the cell inner membrane. In terms of biological role, multidrug efflux pump that functions probably as a Na(+)/drug antiporter. This is Multidrug resistance protein MdtK from Citrobacter koseri (strain ATCC BAA-895 / CDC 4225-83 / SGSC4696).